A 101-amino-acid polypeptide reads, in one-letter code: Large ribosomal subunit protein bL21 (101 aa).

Belongs to the bacterial ribosomal protein bL21 family. Part of the 50S ribosomal subunit. Contacts protein L20.

Functionally, this protein binds to 23S rRNA in the presence of protein L20. The sequence is that of Large ribosomal subunit protein bL21 from Sulfurovum sp. (strain NBC37-1).